Reading from the N-terminus, the 258-residue chain is Flagellar brake protein YcgR (258 aa).

In terms of domain architecture, PilZ spans 131–248 (QKREYYRVAT…ALSLIQRYIT (118 aa)).

Belongs to the YcgR family. Monomer. Interacts with the flagellar basal bodies.

Its subcellular location is the bacterial flagellum basal body. Acts as a flagellar brake, regulating swimming and swarming in a bis-(3'-5') cyclic diguanylic acid (c-di-GMP)-dependent manner. Binds 1 c-di-GMP dimer per subunit. Increasing levels of c-di-GMP lead to decreased motility. The chain is Flagellar brake protein YcgR from Nitrosospira multiformis (strain ATCC 25196 / NCIMB 11849 / C 71).